We begin with the raw amino-acid sequence, 282 residues long: Probable endonuclease 4 (282 aa).

Zn(2+) contacts are provided by His69, His109, Glu145, Asp179, His182, His216, Asp229, His231, and Glu261.

This sequence belongs to the AP endonuclease 2 family. The cofactor is Zn(2+).

It catalyses the reaction Endonucleolytic cleavage to 5'-phosphooligonucleotide end-products.. In terms of biological role, endonuclease IV plays a role in DNA repair. It cleaves phosphodiester bonds at apurinic or apyrimidinic (AP) sites, generating a 3'-hydroxyl group and a 5'-terminal sugar phosphate. The sequence is that of Probable endonuclease 4 from Campylobacter hominis (strain ATCC BAA-381 / DSM 21671 / CCUG 45161 / LMG 19568 / NCTC 13146 / CH001A).